A 117-amino-acid chain; its full sequence is Small ribosomal subunit protein uS17 (117 aa).

This sequence belongs to the universal ribosomal protein uS17 family. In terms of assembly, part of the 30S ribosomal subunit.

Functionally, one of the primary rRNA binding proteins, it binds specifically to the 5'-end of 16S ribosomal RNA. This is Small ribosomal subunit protein uS17 from Methanocaldococcus jannaschii (strain ATCC 43067 / DSM 2661 / JAL-1 / JCM 10045 / NBRC 100440) (Methanococcus jannaschii).